Reading from the N-terminus, the 787-residue chain is Endonuclease MutS2 (787 aa).

329 to 336 lines the ATP pocket; it reads GPNTGGKT. The Smr domain occupies 712–787; that stretch reads INLLGCTVDE…DAGVTIVDFK (76 aa).

It belongs to the DNA mismatch repair MutS family. MutS2 subfamily. As to quaternary structure, homodimer. Binds to stalled ribosomes, contacting rRNA.

Functionally, endonuclease that is involved in the suppression of homologous recombination and thus may have a key role in the control of bacterial genetic diversity. In terms of biological role, acts as a ribosome collision sensor, splitting the ribosome into its 2 subunits. Detects stalled/collided 70S ribosomes which it binds and splits by an ATP-hydrolysis driven conformational change. Acts upstream of the ribosome quality control system (RQC), a ribosome-associated complex that mediates the extraction of incompletely synthesized nascent chains from stalled ribosomes and their subsequent degradation. Probably generates substrates for RQC. This Lachnospira eligens (strain ATCC 27750 / DSM 3376 / VPI C15-48 / C15-B4) (Eubacterium eligens) protein is Endonuclease MutS2.